The chain runs to 129 residues: Glycine cleavage system H protein (129 aa).

The Lipoyl-binding domain occupies 24–106 (LVRVGISAFA…HGEGWLLVLR (83 aa)). Lys-65 carries the post-translational modification N6-lipoyllysine.

It belongs to the GcvH family. In terms of assembly, the glycine cleavage system is composed of four proteins: P, T, L and H. The cofactor is (R)-lipoate.

Functionally, the glycine cleavage system catalyzes the degradation of glycine. The H protein shuttles the methylamine group of glycine from the P protein to the T protein. The protein is Glycine cleavage system H protein of Synechococcus sp. (strain CC9605).